The chain runs to 238 residues: Probable transcriptional regulatory protein YeeN (238 aa).

The protein belongs to the TACO1 family. YeeN subfamily.

Its subcellular location is the cytoplasm. This Salmonella choleraesuis (strain SC-B67) protein is Probable transcriptional regulatory protein YeeN.